The primary structure comprises 161 residues: Glutaredoxin-2, mitochondrial (161 aa).

The transit peptide at Met-1 to Gly-19 directs the protein to the mitochondrion. Position 20 is a phosphoserine (Ser-20). Residues Val-54–Lys-154 enclose the Glutaredoxin domain. Cys-65 is a [2Fe-2S] cluster binding site. Lys-71 contacts glutathione. At Cys-74 the chain carries S-glutathionyl cysteine; alternate. Cys-74 and Cys-77 are joined by a disulfide. Glutathione-binding residues include Gln-106 and Val-118. Residue Cys-150 participates in [2Fe-2S] cluster binding.

It belongs to the glutaredoxin family. As to quaternary structure, monomer; active form. Homodimer; inactive form. The homodimer is probably linked by 1 2Fe-2S cluster.

The protein resides in the mitochondrion. The 2Fe-2S present in the homodimer leads to inactivation of the enzyme. The 2Fe-2S may serve as a redox sensor: the presence of one-electron oxidants or reductants leading to the loss of the 2Fe-2S cluster, subsequent monomerization and activation of the enzyme. Functionally, glutathione-dependent oxidoreductase that facilitates the maintenance of mitochondrial redox homeostasis upon induction of apoptosis by oxidative stress. Involved in response to hydrogen peroxide and regulation of apoptosis caused by oxidative stress. Acts as a very efficient catalyst of monothiol reactions because of its high affinity for protein glutathione-mixed disulfides. Can receive electrons not only from glutathione (GSH), but also from thioredoxin reductase supporting both monothiol and dithiol reactions. Efficiently catalyzes both glutathionylation and deglutathionylation of mitochondrial complex I, which in turn regulates the superoxide production by the complex. Overexpression decreases the susceptibility to apoptosis and prevents loss of cardiolipin and cytochrome c release. The sequence is that of Glutaredoxin-2, mitochondrial (GLRX2) from Pongo abelii (Sumatran orangutan).